The sequence spans 872 residues: Alanine--tRNA ligase (872 aa).

His-567, His-571, Cys-669, and His-673 together coordinate Zn(2+).

It belongs to the class-II aminoacyl-tRNA synthetase family. Zn(2+) serves as cofactor.

The protein resides in the cytoplasm. The catalysed reaction is tRNA(Ala) + L-alanine + ATP = L-alanyl-tRNA(Ala) + AMP + diphosphate. Catalyzes the attachment of alanine to tRNA(Ala) in a two-step reaction: alanine is first activated by ATP to form Ala-AMP and then transferred to the acceptor end of tRNA(Ala). Also edits incorrectly charged Ser-tRNA(Ala) and Gly-tRNA(Ala) via its editing domain. In Streptococcus pyogenes serotype M3 (strain ATCC BAA-595 / MGAS315), this protein is Alanine--tRNA ligase.